A 224-amino-acid chain; its full sequence is MQSYDIAQFIDHTALTAEKTEQDILDLCNEAIEHNFFSVCINSGYIPLARQKLQNTNVKICTVVGFPLGANLSTVKAFEAKEAIKAGATEIDMVINIGWIKSNQWESVKADIQAVLAACEGALLKVILETCLLTKEEIITACKICRELGVGFVKTSTGFNKGGATVENIALMRQVVGENIGVKASGGVRDTKTAIEMIKNGATRIGSSSGIAIINGLTDNNAIY.

Asp92 functions as the Proton donor/acceptor in the catalytic mechanism. The Schiff-base intermediate with acetaldehyde role is filled by Lys154. Lys183 serves as the catalytic Proton donor/acceptor.

This sequence belongs to the DeoC/FbaB aldolase family. DeoC type 1 subfamily.

It is found in the cytoplasm. It carries out the reaction 2-deoxy-D-ribose 5-phosphate = D-glyceraldehyde 3-phosphate + acetaldehyde. It participates in carbohydrate degradation; 2-deoxy-D-ribose 1-phosphate degradation; D-glyceraldehyde 3-phosphate and acetaldehyde from 2-deoxy-alpha-D-ribose 1-phosphate: step 2/2. In terms of biological role, catalyzes a reversible aldol reaction between acetaldehyde and D-glyceraldehyde 3-phosphate to generate 2-deoxy-D-ribose 5-phosphate. The sequence is that of Deoxyribose-phosphate aldolase from Histophilus somni (strain 129Pt) (Haemophilus somnus).